The chain runs to 194 residues: Imidazoleglycerol-phosphate dehydratase (194 aa).

It belongs to the imidazoleglycerol-phosphate dehydratase family.

It localises to the cytoplasm. It catalyses the reaction D-erythro-1-(imidazol-4-yl)glycerol 3-phosphate = 3-(imidazol-4-yl)-2-oxopropyl phosphate + H2O. Its pathway is amino-acid biosynthesis; L-histidine biosynthesis; L-histidine from 5-phospho-alpha-D-ribose 1-diphosphate: step 6/9. The sequence is that of Imidazoleglycerol-phosphate dehydratase from Methanothermobacter thermautotrophicus (strain ATCC 29096 / DSM 1053 / JCM 10044 / NBRC 100330 / Delta H) (Methanobacterium thermoautotrophicum).